The sequence spans 498 residues: Glutamyl-tRNA(Gln) amidotransferase subunit A (498 aa).

Residues lysine 80 and serine 155 each act as charge relay system in the active site. Residues 132–159 (SSTENSAYGPTRNPWDTDRVPGGSSGGS) form a disordered region. The Acyl-ester intermediate role is filled by serine 179.

Belongs to the amidase family. GatA subfamily. In terms of assembly, heterotrimer of A, B and C subunits.

It carries out the reaction L-glutamyl-tRNA(Gln) + L-glutamine + ATP + H2O = L-glutaminyl-tRNA(Gln) + L-glutamate + ADP + phosphate + H(+). Functionally, allows the formation of correctly charged Gln-tRNA(Gln) through the transamidation of misacylated Glu-tRNA(Gln) in organisms which lack glutaminyl-tRNA synthetase. The reaction takes place in the presence of glutamine and ATP through an activated gamma-phospho-Glu-tRNA(Gln). This is Glutamyl-tRNA(Gln) amidotransferase subunit A from Thermobifida fusca (strain YX).